Consider the following 406-residue polypeptide: MDLRRWFPTLYTQSKDSPVRSRDATLYLLRCVFLMGVRKPPAKFFVAYVLWSFALNFCSTFYQPIGFLTGYISHLSEFSPGEFLTSLQVAFNAWSCSTKVLIVWALVKRFDEANNLLDEMDRRITDPGERLQIHRAVSLSNRIFFFFMAVYMVYATNTFLSAIFIGRPPYQNYYPFLDWRSSTLHLALQAGLEYFAMAGACFQDVCVDCYPVNFVLVLRAHMSIFAERLRRLGTYPYESQEQKYERLVQCIQDHKVILRFVDCLRPVISGTIFVQFLVVGLVLGFTLINIVLFANLGSAIAALSFMAAVLLETTPFCILCNYLTEDCYKLADALFQSNWIDEEKRYQKTLMYFLQKLQQPITFMAMNVFPISVGTNISVTKFSFSVFTLVKQMNISEKLAKSEMEE.

The Cytoplasmic segment spans residues 1-44 (MDLRRWFPTLYTQSKDSPVRSRDATLYLLRCVFLMGVRKPPAKF). The chain crosses the membrane as a helical span at residues 45 to 65 (FVAYVLWSFALNFCSTFYQPI). The Extracellular portion of the chain corresponds to 66-86 (GFLTGYISHLSEFSPGEFLTS). Residues 87–107 (LQVAFNAWSCSTKVLIVWALV) form a helical membrane-spanning segment. The Cytoplasmic portion of the chain corresponds to 108-142 (KRFDEANNLLDEMDRRITDPGERLQIHRAVSLSNR). Residues 143–163 (IFFFFMAVYMVYATNTFLSAI) form a helical membrane-spanning segment. At 164–181 (FIGRPPYQNYYPFLDWRS) the chain is on the extracellular side. Residues 182 to 202 (STLHLALQAGLEYFAMAGACF) traverse the membrane as a helical segment. Residues 203-271 (QDVCVDCYPV…DCLRPVISGT (69 aa)) lie on the Cytoplasmic side of the membrane. A helical membrane pass occupies residues 272-292 (IFVQFLVVGLVLGFTLINIVL). The Extracellular portion of the chain corresponds to 293-298 (FANLGS). A helical membrane pass occupies residues 299 to 319 (AIAALSFMAAVLLETTPFCIL). Over 320–359 (CNYLTEDCYKLADALFQSNWIDEEKRYQKTLMYFLQKLQQ) the chain is Cytoplasmic. Residues 360-380 (PITFMAMNVFPISVGTNISVT) form a helical membrane-spanning segment. The Extracellular portion of the chain corresponds to 381–406 (KFSFSVFTLVKQMNISEKLAKSEMEE). The N-linked (GlcNAc...) asparagine glycan is linked to Asn-394.

This sequence belongs to the insect chemoreceptor superfamily. Heteromeric odorant receptor channel (TC 1.A.69) family. Or2a subfamily. In terms of assembly, interacts with Orco. Complexes exist early in the endomembrane system in olfactory sensory neurons (OSNs), coupling these complexes to the conserved ciliary trafficking pathway.

The protein localises to the cell membrane. Its function is as follows. Odorant receptor which mediates acceptance or avoidance behavior, depending on its substrates. The odorant receptor repertoire encodes a large collection of odor stimuli that vary widely in identity, intensity, and duration. May form a complex with Orco to form odorant-sensing units, providing sensitive and prolonged odorant signaling and calcium permeability. Involved in the behavioral responses to butanol, ethyl acetate, propyl acetate, and pentyl acetate. Also responds to pyrazines. This is Odorant receptor 42a (Or42a) from Drosophila melanogaster (Fruit fly).